The primary structure comprises 305 residues: Nitrogen assimilation regulatory protein nac (305 aa).

In terms of domain architecture, HTH lysR-type spans 1–58 (MNFRRLKYFVKIVDIGSLTQAAEVLHIAQPALSQQVATLEGELNQQLLIRTKRGVTPT). Residues 18–37 (LTQAAEVLHIAQPALSQQVA) constitute a DNA-binding region (H-T-H motif).

It belongs to the LysR transcriptional regulatory family.

Transcriptional activator for the hut, put and ure operons and repressor for the gdh and gltB operons in response to nitrogen limitation. Negative regulator of its own expression. This is Nitrogen assimilation regulatory protein nac (nac) from Escherichia coli (strain K12).